Reading from the N-terminus, the 905-residue chain is Protein translocase subunit SecA (905 aa).

Residues Q87, 105–109, and D512 contribute to the ATP site; that span reads GEGKT. A disordered region spans residues 565-584; that stretch reads RRIDNQLRGRSGRQGDPGSS. C886, C888, C897, and H898 together coordinate Zn(2+).

It belongs to the SecA family. As to quaternary structure, monomer and homodimer. Part of the essential Sec protein translocation apparatus which comprises SecA, SecYEG and auxiliary proteins SecDF-YajC and YidC. The cofactor is Zn(2+).

It is found in the cell inner membrane. Its subcellular location is the cytoplasm. The catalysed reaction is ATP + H2O + cellular proteinSide 1 = ADP + phosphate + cellular proteinSide 2.. Its function is as follows. Part of the Sec protein translocase complex. Interacts with the SecYEG preprotein conducting channel. Has a central role in coupling the hydrolysis of ATP to the transfer of proteins into and across the cell membrane, serving both as a receptor for the preprotein-SecB complex and as an ATP-driven molecular motor driving the stepwise translocation of polypeptide chains across the membrane. This is Protein translocase subunit SecA from Haemophilus ducreyi (strain 35000HP / ATCC 700724).